The primary structure comprises 252 residues: Oncostatin-M (252 aa).

A signal peptide spans 1-25 (MGVLLTQRTLLSLVLALLFPSMASM). Disulfide bonds link cysteine 31–cysteine 152 and cysteine 74–cysteine 192. Asparagine 100 carries an N-linked (GlcNAc...) asparagine glycan. Disordered regions lie at residues 162-184 (TAEPTKAGRGASQPPTPTPASDA) and 213-252 (GESPNRSRRHSPHQALRKGVRRTRPSRKGKRLMTRGQLPR). An N-linked (GlcNAc...) asparagine glycan is attached at asparagine 217. A compositionally biased stretch (basic residues) spans 218-245 (RSRRHSPHQALRKGVRRTRPSRKGKRLM). A propeptide spanning residues 222–252 (HSPHQALRKGVRRTRPSRKGKRLMTRGQLPR) is cleaved from the precursor.

This sequence belongs to the LIF/OSM family. In terms of processing, propeptide processing is not important for receptor binding activity but may be important growth-inhibitory activity.

The protein resides in the secreted. Functionally, growth regulator. Inhibits the proliferation of a number of tumor cell lines. Stimulates proliferation of AIDS-KS cells. It regulates cytokine production, including IL-6, G-CSF and GM-CSF from endothelial cells. Uses both type I OSM receptor (heterodimers composed of LIFR and IL6ST) and type II OSM receptor (heterodimers composed of OSMR and IL6ST). Involved in the maturation of fetal hepatocytes, thereby promoting liver development and regeneration. In Homo sapiens (Human), this protein is Oncostatin-M (OSM).